Reading from the N-terminus, the 248-residue chain is PF03932 family protein CutC (248 aa).

It belongs to the CutC family. As to quaternary structure, homodimer.

It localises to the cytoplasm. The protein is PF03932 family protein CutC of Salmonella heidelberg (strain SL476).